The chain runs to 689 residues: Elongation factor G (689 aa).

One can recognise a tr-type G domain in the interval 9-283 (AKFRNIGIMA…AIIEFMPSPL (275 aa)). GTP contacts are provided by residues 18-25 (AHIDAGKT), 82-86 (DTPGH), and 136-139 (NKMD).

Belongs to the TRAFAC class translation factor GTPase superfamily. Classic translation factor GTPase family. EF-G/EF-2 subfamily.

It is found in the cytoplasm. Its function is as follows. Catalyzes the GTP-dependent ribosomal translocation step during translation elongation. During this step, the ribosome changes from the pre-translocational (PRE) to the post-translocational (POST) state as the newly formed A-site-bound peptidyl-tRNA and P-site-bound deacylated tRNA move to the P and E sites, respectively. Catalyzes the coordinated movement of the two tRNA molecules, the mRNA and conformational changes in the ribosome. The protein is Elongation factor G of Clostridium botulinum (strain 657 / Type Ba4).